Reading from the N-terminus, the 267-residue chain is Methyl-coenzyme M reductase II subunit gamma (267 aa).

Residue Arg-123 participates in coenzyme M binding.

The protein belongs to the methyl-coenzyme M reductase gamma subunit family. MCR is a hexamer of two alpha, two beta, and two gamma chains, forming a dimer of heterotrimers. Requires coenzyme F430 as cofactor.

It catalyses the reaction coenzyme B + methyl-coenzyme M = methane + coenzyme M-coenzyme B heterodisulfide. Its pathway is one-carbon metabolism; methyl-coenzyme M reduction; methane from methyl-coenzyme M: step 1/1. Component of the methyl-coenzyme M reductase (MCR) I that catalyzes the reductive cleavage of methyl-coenzyme M (CoM-S-CH3 or 2-(methylthio)ethanesulfonate) using coenzyme B (CoB or 7-mercaptoheptanoylthreonine phosphate) as reductant which results in the production of methane and the mixed heterodisulfide of CoB and CoM (CoM-S-S-CoB). This is the final step in methanogenesis. This chain is Methyl-coenzyme M reductase II subunit gamma (mrtG), found in Methanothermus fervidus (strain ATCC 43054 / DSM 2088 / JCM 10308 / V24 S).